Consider the following 154-residue polypeptide: Transcriptional repressor NrdR (154 aa).

A zinc finger lies at 3–34 (CPTCKYNGTRVVDSRPADDGNSIRRRRECEKC). The 91-residue stretch at 49–139 (LIVVKKDGAR…VYRQFKDISV (91 aa)) folds into the ATP-cone domain.

It belongs to the NrdR family. Zn(2+) serves as cofactor.

Its function is as follows. Negatively regulates transcription of bacterial ribonucleotide reductase nrd genes and operons by binding to NrdR-boxes. The chain is Transcriptional repressor NrdR from Listeria welshimeri serovar 6b (strain ATCC 35897 / DSM 20650 / CCUG 15529 / CIP 8149 / NCTC 11857 / SLCC 5334 / V8).